The primary structure comprises 205 residues: RNA pyrophosphohydrolase (205 aa).

The Nudix hydrolase domain maps to 6 to 149 (GFRPNVGIVL…KRGVYARALR (144 aa)). A Nudix box motif is present at residues 38–59 (GGMNTDETPVEAMYRELREETG). Residues 178-205 (GSSAAGHDSPRKRPRKRNGARAMRINND) form a disordered region. The span at 187 to 196 (PRKRPRKRNG) shows a compositional bias: basic residues.

The protein belongs to the Nudix hydrolase family. RppH subfamily. A divalent metal cation is required as a cofactor.

Functionally, accelerates the degradation of transcripts by removing pyrophosphate from the 5'-end of triphosphorylated RNA, leading to a more labile monophosphorylated state that can stimulate subsequent ribonuclease cleavage. This is RNA pyrophosphohydrolase from Xanthomonas axonopodis pv. citri (strain 306).